Consider the following 833-residue polypeptide: Leucine--tRNA ligase (833 aa).

The 'HIGH' region motif lies at 41-52 (PYPSGAGLHVGH). The 'KMSKS' region motif lies at 610 to 614 (KMSKS). Lys-613 provides a ligand contact to ATP.

The protein belongs to the class-I aminoacyl-tRNA synthetase family.

The protein resides in the cytoplasm. It carries out the reaction tRNA(Leu) + L-leucine + ATP = L-leucyl-tRNA(Leu) + AMP + diphosphate. The protein is Leucine--tRNA ligase of Streptococcus pyogenes serotype M1.